Consider the following 436-residue polypeptide: Nicotinate phosphoribosyltransferase (436 aa).

H231 is modified (phosphohistidine; by autocatalysis).

It belongs to the NAPRTase family. Post-translationally, transiently phosphorylated on a His residue during the reaction cycle. Phosphorylation strongly increases the affinity for substrates and increases the rate of nicotinate D-ribonucleotide production. Dephosphorylation regenerates the low-affinity form of the enzyme, leading to product release.

The enzyme catalyses nicotinate + 5-phospho-alpha-D-ribose 1-diphosphate + ATP + H2O = nicotinate beta-D-ribonucleotide + ADP + phosphate + diphosphate. The protein operates within cofactor biosynthesis; NAD(+) biosynthesis; nicotinate D-ribonucleotide from nicotinate: step 1/1. Functionally, catalyzes the synthesis of beta-nicotinate D-ribonucleotide from nicotinate and 5-phospho-D-ribose 1-phosphate at the expense of ATP. In Vibrio parahaemolyticus serotype O3:K6 (strain RIMD 2210633), this protein is Nicotinate phosphoribosyltransferase.